The following is a 154-amino-acid chain: MGLSDGEWQLVLNAWGKVETDIGGHGQEVLIRLFKGHPETLEKFDKFKHLKSEDEMKASEDLKKHGTTVLTALGNILKKKGQHEAELAPLAQSHATKHKIPVKYLEFISEAIIQVLESKHPGDFGADAQGAMSKALELFRNDIAAKYKELGFQG.

In terms of domain architecture, Globin spans 2–148; it reads GLSDGEWQLV…FRNDIAAKYK (147 aa). S4 bears the Phosphoserine mark. H65 contributes to the nitrite binding site. O2 is bound at residue H65. T68 carries the post-translational modification Phosphothreonine. Position 94 (H94) interacts with heme b.

Belongs to the globin family. In terms of assembly, monomeric.

The protein localises to the cytoplasm. It is found in the sarcoplasm. It catalyses the reaction Fe(III)-heme b-[protein] + nitric oxide + H2O = Fe(II)-heme b-[protein] + nitrite + 2 H(+). The enzyme catalyses H2O2 + AH2 = A + 2 H2O. In terms of biological role, monomeric heme protein which primary function is to store oxygen and facilitate its diffusion within muscle tissues. Reversibly binds oxygen through a pentacoordinated heme iron and enables its timely and efficient release as needed during periods of heightened demand. Depending on the oxidative conditions of tissues and cells, and in addition to its ability to bind oxygen, it also has a nitrite reductase activity whereby it regulates the production of bioactive nitric oxide. Under stress conditions, like hypoxia and anoxia, it also protects cells against reactive oxygen species thanks to its pseudoperoxidase activity. This Ctenodactylus gundi (Northern gundi) protein is Myoglobin (MB).